We begin with the raw amino-acid sequence, 492 residues long: uncharacterized protein (492 aa).

Belongs to the FGGY kinase family.

This is an uncharacterized protein from Archaeoglobus fulgidus (strain ATCC 49558 / DSM 4304 / JCM 9628 / NBRC 100126 / VC-16).